We begin with the raw amino-acid sequence, 373 residues long: Enoyl-[acyl-carrier-protein] reductase, mitochondrial (373 aa).

A mitochondrion-targeting transit peptide spans 1-53; that stretch reads MLVSRRLTGARARAPLLASLLEAWCRQGRTTSSYSAFSEPSHVRALVYGNHGD. At Lys-61 the chain carries N6-acetyllysine; alternate. Residue Lys-61 is modified to N6-succinyllysine; alternate. Tyr-94 acts as the Proton donor in catalysis. NADP(+)-binding positions include Asn-167, 193-196, and 216-218; these read NSGV and RDR. N6-acetyllysine; alternate is present on residues Lys-252 and Lys-267. Lys-252 and Lys-267 each carry N6-succinyllysine; alternate. Residues 285 to 288 and 310 to 312 contribute to the NADP(+) site; these read YGGM and FWL. Position 316 is an N6-succinyllysine (Lys-316). Lys-368 is an NADP(+) binding site.

Belongs to the zinc-containing alcohol dehydrogenase family. Quinone oxidoreductase subfamily. Homodimer. As to quaternary structure, interacts with PPARA in the nucleus and increases its activity.

Its subcellular location is the mitochondrion. It is found in the cytoplasm. The protein localises to the nucleus. It carries out the reaction a 2,3-saturated acyl-[ACP] + NADP(+) = a (2E)-enoyl-[ACP] + NADPH + H(+). The enzyme catalyses (2E)-butenoyl-[ACP] + NADPH + H(+) = butanoyl-[ACP] + NADP(+). The catalysed reaction is (2E)-hexenoyl-[ACP] + NADPH + H(+) = hexanoyl-[ACP] + NADP(+). It catalyses the reaction (2E)-octenoyl-[ACP] + NADPH + H(+) = octanoyl-[ACP] + NADP(+). It carries out the reaction (2E)-decenoyl-[ACP] + NADPH + H(+) = decanoyl-[ACP] + NADP(+). The enzyme catalyses (2E)-dodecenoyl-[ACP] + NADPH + H(+) = dodecanoyl-[ACP] + NADP(+). The catalysed reaction is (2E)-tetradecenoyl-[ACP] + NADPH + H(+) = tetradecanoyl-[ACP] + NADP(+). It catalyses the reaction (2E)-hexadecenoyl-[ACP] + NADPH + H(+) = hexadecanoyl-[ACP] + NADP(+). In terms of biological role, catalyzes the NADPH-dependent reduction of trans-2-enoyl thioesters in mitochondrial fatty acid synthesis (fatty acid synthesis type II). Fatty acid chain elongation in mitochondria uses acyl carrier protein (ACP) as an acyl group carrier, but the enzyme accepts both ACP and CoA thioesters as substrates in vitro. Displays a preference for medium-chain over short- and long-chain substrates. May provide the octanoyl chain used for lipoic acid biosynthesis, regulating protein lipoylation and mitochondrial respiratory activity particularly in Purkinje cells. Involved in iron homeostasis; affecting Fe-S cluster assembly and ceramide metabolism. Required for proper morphology and bioenergetic functions of mitochondria. Required for maintenance of neurons. The polypeptide is Enoyl-[acyl-carrier-protein] reductase, mitochondrial (Mecr) (Rattus norvegicus (Rat)).